The primary structure comprises 338 residues: Ketol-acid reductoisomerase (NADP(+)) (338 aa).

The region spanning 1-181 is the KARI N-terminal Rossmann domain; sequence MKVYYDKDAD…GGTKGGVIET (181 aa). Residues 24–27, Arg47, and Ser52 contribute to the NADP(+) site; that span reads YGSQ. His107 is an active-site residue. Gly133 lines the NADP(+) pocket. The KARI C-terminal knotted domain occupies 182-327; it reads NFREETETDL…GQLRDMMPWI (146 aa). Residues Asp190, Glu194, Glu226, and Glu230 each contribute to the Mg(2+) site. Position 251 (Ser251) interacts with substrate.

Belongs to the ketol-acid reductoisomerase family. Mg(2+) serves as cofactor.

The catalysed reaction is (2R)-2,3-dihydroxy-3-methylbutanoate + NADP(+) = (2S)-2-acetolactate + NADPH + H(+). It carries out the reaction (2R,3R)-2,3-dihydroxy-3-methylpentanoate + NADP(+) = (S)-2-ethyl-2-hydroxy-3-oxobutanoate + NADPH + H(+). It functions in the pathway amino-acid biosynthesis; L-isoleucine biosynthesis; L-isoleucine from 2-oxobutanoate: step 2/4. It participates in amino-acid biosynthesis; L-valine biosynthesis; L-valine from pyruvate: step 2/4. Involved in the biosynthesis of branched-chain amino acids (BCAA). Catalyzes an alkyl-migration followed by a ketol-acid reduction of (S)-2-acetolactate (S2AL) to yield (R)-2,3-dihydroxy-isovalerate. In the isomerase reaction, S2AL is rearranged via a Mg-dependent methyl migration to produce 3-hydroxy-3-methyl-2-ketobutyrate (HMKB). In the reductase reaction, this 2-ketoacid undergoes a metal-dependent reduction by NADPH to yield (R)-2,3-dihydroxy-isovalerate. The protein is Ketol-acid reductoisomerase (NADP(+)) of Aromatoleum aromaticum (strain DSM 19018 / LMG 30748 / EbN1) (Azoarcus sp. (strain EbN1)).